Here is a 174-residue protein sequence, read N- to C-terminus: Peptide deformylase (174 aa).

Residues cysteine 98 and histidine 140 each coordinate Fe cation. Glutamate 141 is a catalytic residue. Histidine 144 lines the Fe cation pocket.

The protein belongs to the polypeptide deformylase family. Requires Fe(2+) as cofactor.

It carries out the reaction N-terminal N-formyl-L-methionyl-[peptide] + H2O = N-terminal L-methionyl-[peptide] + formate. In terms of biological role, removes the formyl group from the N-terminal Met of newly synthesized proteins. Requires at least a dipeptide for an efficient rate of reaction. N-terminal L-methionine is a prerequisite for activity but the enzyme has broad specificity at other positions. This Bradyrhizobium diazoefficiens (strain JCM 10833 / BCRC 13528 / IAM 13628 / NBRC 14792 / USDA 110) protein is Peptide deformylase.